A 141-amino-acid polypeptide reads, in one-letter code: ATP synthase F(0) complex subunit C3, mitochondrial (141 aa).

Residues 1-66 (MFACAKLACT…REFQTTAVNR (66 aa)) constitute a mitochondrion transit peptide. Residues 82-102 (VGVAGSGAGIGTVFGSLIIGY) form a helical membrane-spanning segment. An N6,N6,N6-trimethyllysine modification is found at lysine 109. Residues 117-137 (ILGFALSEAMGLFCLMVAFLI) form a helical membrane-spanning segment.

The protein belongs to the ATPase C chain family. In terms of assembly, F-type ATPases have 2 components, CF(1) - the catalytic core - and CF(0) - the membrane proton channel. CF(1) has five subunits: alpha(3), beta(3), gamma(1), delta(1), epsilon(1). CF(0) has three main subunits: a, b and c. Interacts with TMEM70 and TMEM242. In terms of processing, trimethylated by ATPSCKMT at Lys-109. Methylation is required for proper incorporation of the C subunit into the ATP synthase complex and mitochondrial respiration.

It localises to the mitochondrion membrane. Mitochondrial membrane ATP synthase (F(1)F(0) ATP synthase or Complex V) produces ATP from ADP in the presence of a proton gradient across the membrane which is generated by electron transport complexes of the respiratory chain. F-type ATPases consist of two structural domains, F(1) - containing the extramembraneous catalytic core and F(0) - containing the membrane proton channel, linked together by a central stalk and a peripheral stalk. During catalysis, ATP synthesis in the catalytic domain of F(1) is coupled via a rotary mechanism of the central stalk subunits to proton translocation. Part of the complex F(0) domain. A homomeric c-ring of probably 10 subunits is part of the complex rotary element. This is ATP synthase F(0) complex subunit C3, mitochondrial from Bos taurus (Bovine).